The sequence spans 42 residues: Photosystem I reaction center subunit IX (42 aa).

A helical membrane pass occupies residues 7–27 (YLSAAPVLSTLWLGALAGLLI).

The protein belongs to the PsaJ family.

It is found in the plastid membrane. In terms of biological role, may help in the organization of the PsaE and PsaF subunits. The protein is Photosystem I reaction center subunit IX of Cuscuta exaltata (Tall dodder).